The primary structure comprises 270 residues: MPKSKRARVYHLTQVNKKGREAKERLFSNIRETIPKYQHCFVFSVDNMRNNYLKDVRHELNDCRIFFGKTKLMARALGTTPEEEQADGLHRLTRYLTGTVGLLFTNRDPADIESYFSNLSQVDFARAGTVAPRTVTVPPGIVYSTGGEVPPEHDVPVSHTLEPELRRLGMPVRMIKGKVCLGDEKGEASEGYTICKEGEVLDSRQTRLLKLFSICLSEFKVSLLGYWSSASGEVTELEAGKTRPKREGNRRQAMNGDEMDEDQSSDEDSD.

Residues 234–270 form a disordered region; that stretch reads VTELEAGKTRPKREGNRRQAMNGDEMDEDQSSDEDSD. A compositionally biased stretch (basic and acidic residues) spans 238–250; that stretch reads EAGKTRPKREGNR. Residues 257-270 show a composition bias toward acidic residues; the sequence is DEMDEDQSSDEDSD.

Belongs to the universal ribosomal protein uL10 family. Associates with the pre-60S ribosomal particle.

It is found in the nucleus. It localises to the nucleolus. Its subcellular location is the cytoplasm. In terms of biological role, component of the ribosome assembly machinery. Nuclear paralog of the ribosomal protein P0, it binds pre-60S subunits at an early stage of assembly in the nucleolus, and is replaced by P0 in cytoplasmic pre-60S subunits and mature 80S ribosomes. This Chaetomium thermophilum (strain DSM 1495 / CBS 144.50 / IMI 039719) (Thermochaetoides thermophila) protein is Large ribosomal subunit protein uL10.